The following is a 66-amino-acid chain: MKAKEIRELSNEELQQKLSELKAELFNLRFQLATGQLDNPMRIRDVRKTIARIKTILRERELGIKR.

It belongs to the universal ribosomal protein uL29 family.

This is Large ribosomal subunit protein uL29 from Caldanaerobacter subterraneus subsp. tengcongensis (strain DSM 15242 / JCM 11007 / NBRC 100824 / MB4) (Thermoanaerobacter tengcongensis).